Reading from the N-terminus, the 421-residue chain is 4-aminobutyrate aminotransferase PuuE (421 aa).

Residues 110–111 (GA) and 238–241 (DEVQ) contribute to the pyridoxal 5'-phosphate site. Position 267 is an N6-(pyridoxal phosphate)lysine (Lys-267). A pyridoxal 5'-phosphate-binding site is contributed by Thr-296.

The protein belongs to the class-III pyridoxal-phosphate-dependent aminotransferase family. Pyridoxal 5'-phosphate serves as cofactor.

The catalysed reaction is 4-aminobutanoate + 2-oxoglutarate = succinate semialdehyde + L-glutamate. Its pathway is amine and polyamine degradation; putrescine degradation; succinate semialdehyde from 4-aminobutanoate. With respect to regulation, completely inhibited by succinate and low-aeration conditions. Its function is as follows. Catalyzes the transfer of the amino group from gamma-aminobutyrate (GABA) to alpha-ketoglutarate (KG) to yield succinic semialdehyde (SSA). PuuE is important for utilization of putrescine as the sole nitrogen or carbon source. The polypeptide is 4-aminobutyrate aminotransferase PuuE (puuE) (Escherichia coli (strain K12)).